The primary structure comprises 214 residues: Urease accessory protein UreG 2 (214 aa).

Position 22–29 (22–29) interacts with GTP; that stretch reads GPVGSGKT.

This sequence belongs to the SIMIBI class G3E GTPase family. UreG subfamily. In terms of assembly, homodimer. UreD, UreF and UreG form a complex that acts as a GTP-hydrolysis-dependent molecular chaperone, activating the urease apoprotein by helping to assemble the nickel containing metallocenter of UreC. The UreE protein probably delivers the nickel.

Its subcellular location is the cytoplasm. In terms of biological role, facilitates the functional incorporation of the urease nickel metallocenter. This process requires GTP hydrolysis, probably effectuated by UreG. This Bradyrhizobium sp. (strain BTAi1 / ATCC BAA-1182) protein is Urease accessory protein UreG 2.